The chain runs to 493 residues: Glutamyl-tRNA(Gln) amidotransferase subunit A (493 aa).

Residues Lys79 and Ser159 each act as charge relay system in the active site. Ser183 acts as the Acyl-ester intermediate in catalysis.

Belongs to the amidase family. GatA subfamily. As to quaternary structure, heterotrimer of A, B and C subunits.

The catalysed reaction is L-glutamyl-tRNA(Gln) + L-glutamine + ATP + H2O = L-glutaminyl-tRNA(Gln) + L-glutamate + ADP + phosphate + H(+). Its function is as follows. Allows the formation of correctly charged Gln-tRNA(Gln) through the transamidation of misacylated Glu-tRNA(Gln) in organisms which lack glutaminyl-tRNA synthetase. The reaction takes place in the presence of glutamine and ATP through an activated gamma-phospho-Glu-tRNA(Gln). This Brucella melitensis biotype 2 (strain ATCC 23457) protein is Glutamyl-tRNA(Gln) amidotransferase subunit A.